A 370-amino-acid polypeptide reads, in one-letter code: tRNA-specific 2-thiouridylase MnmA (370 aa).

ATP is bound by residues 11-18 (GMSGGVDS) and methionine 37. The segment at 97–99 (NPD) is interaction with target base in tRNA. Cysteine 102 serves as the catalytic Nucleophile. Cysteine 102 and cysteine 199 are joined by a disulfide. An ATP-binding site is contributed by glycine 126. The interval 149 to 151 (KDQ) is interaction with tRNA. The active-site Cysteine persulfide intermediate is cysteine 199. Residues 307–308 (RY) form an interaction with tRNA region.

The protein belongs to the MnmA/TRMU family.

Its subcellular location is the cytoplasm. It carries out the reaction S-sulfanyl-L-cysteinyl-[protein] + uridine(34) in tRNA + AH2 + ATP = 2-thiouridine(34) in tRNA + L-cysteinyl-[protein] + A + AMP + diphosphate + H(+). In terms of biological role, catalyzes the 2-thiolation of uridine at the wobble position (U34) of tRNA, leading to the formation of s(2)U34. The protein is tRNA-specific 2-thiouridylase MnmA of Staphylococcus haemolyticus (strain JCSC1435).